A 497-amino-acid chain; its full sequence is Glycerol kinase (497 aa).

T11 contacts ADP. 3 residues coordinate ATP: T11, T12, and S13. Residue T11 coordinates sn-glycerol 3-phosphate. R15 contributes to the ADP binding site. R81, E82, Y134, and D244 together coordinate sn-glycerol 3-phosphate. Glycerol is bound by residues R81, E82, Y134, D244, and Q245. T266 and G309 together coordinate ADP. ATP is bound by residues T266, G309, Q313, and G410. Residues G410 and N414 each coordinate ADP.

The protein belongs to the FGGY kinase family.

The enzyme catalyses glycerol + ATP = sn-glycerol 3-phosphate + ADP + H(+). Its pathway is polyol metabolism; glycerol degradation via glycerol kinase pathway; sn-glycerol 3-phosphate from glycerol: step 1/1. Inhibited by fructose 1,6-bisphosphate (FBP). Key enzyme in the regulation of glycerol uptake and metabolism. Catalyzes the phosphorylation of glycerol to yield sn-glycerol 3-phosphate. The polypeptide is Glycerol kinase (Fusobacterium nucleatum subsp. nucleatum (strain ATCC 25586 / DSM 15643 / BCRC 10681 / CIP 101130 / JCM 8532 / KCTC 2640 / LMG 13131 / VPI 4355)).